The following is a 362-amino-acid chain: Oryzain gamma chain (362 aa).

Positions 1–24 (MAHRRIILLLAAAAVAATSAVAAA) are cleaved as a signal peptide. The propeptide at 25–144 (SSGFDDSNPI…GNHRMRDAAA (120 aa)) is activation peptide. The N-linked (GlcNAc...) asparagine glycan is linked to Asn128. Cystine bridges form between Cys166–Cys209 and Cys200–Cys242. Residue Cys169 is part of the active site. A glycan (N-linked (GlcNAc...) asparagine) is linked at Asn258. Cys300 and Cys350 are joined by a disulfide. Active-site residues include His309 and Asn329.

The protein belongs to the peptidase C1 family. As to expression, expressed only in seeds.

In Oryza sativa subsp. japonica (Rice), this protein is Oryzain gamma chain.